Consider the following 265-residue polypeptide: Shikimate dehydrogenase (NADP(+)) (265 aa).

Residues 15–17 (SLS) and Thr-62 contribute to the shikimate site. The active-site Proton acceptor is the Lys-66. Residue Glu-78 participates in NADP(+) binding. Shikimate-binding residues include Asn-87 and Asp-102. NADP(+) contacts are provided by residues 126–130 (GAGGV), 150–155 (NRTELK), and Val-210. Tyr-212 contacts shikimate. Residue Gly-233 coordinates NADP(+).

It belongs to the shikimate dehydrogenase family. As to quaternary structure, homodimer.

The catalysed reaction is shikimate + NADP(+) = 3-dehydroshikimate + NADPH + H(+). Its pathway is metabolic intermediate biosynthesis; chorismate biosynthesis; chorismate from D-erythrose 4-phosphate and phosphoenolpyruvate: step 4/7. Its function is as follows. Involved in the biosynthesis of the chorismate, which leads to the biosynthesis of aromatic amino acids. Catalyzes the reversible NADPH linked reduction of 3-dehydroshikimate (DHSA) to yield shikimate (SA). The protein is Shikimate dehydrogenase (NADP(+)) of Pelagibacter ubique (strain HTCC1062).